Consider the following 608-residue polypeptide: Elongation factor 4 (608 aa).

The tr-type G domain maps to 11 to 193 (SKIRNFSIIA…QIVEKVPAPD (183 aa)). GTP-binding positions include 23–28 (DHGKST) and 140–143 (NKID).

This sequence belongs to the TRAFAC class translation factor GTPase superfamily. Classic translation factor GTPase family. LepA subfamily.

The protein resides in the cell membrane. It carries out the reaction GTP + H2O = GDP + phosphate + H(+). In terms of biological role, required for accurate and efficient protein synthesis under certain stress conditions. May act as a fidelity factor of the translation reaction, by catalyzing a one-codon backward translocation of tRNAs on improperly translocated ribosomes. Back-translocation proceeds from a post-translocation (POST) complex to a pre-translocation (PRE) complex, thus giving elongation factor G a second chance to translocate the tRNAs correctly. Binds to ribosomes in a GTP-dependent manner. This chain is Elongation factor 4, found in Bacillus cytotoxicus (strain DSM 22905 / CIP 110041 / 391-98 / NVH 391-98).